We begin with the raw amino-acid sequence, 534 residues long: EH domain-containing protein 1 (534 aa).

N-acetylmethionine is present on Met-1. The Dynamin-type G domain maps to 55–286 (FDNKPMVLLV…DLFKDIQSLP (232 aa)). Residues 65 to 72 (GQYSTGKT) are G1 motif. Position 65–72 (65–72 (GQYSTGKT)) interacts with ATP. Residues 91–92 (EP) are G2 motif. The tract at residues 153–156 (DTPG) is G3 motif. The stretch at 198–227 (DEFSEVIKALKNHEDKIRVVLNKADQIETQ) forms a coiled coil. Residues 219–222 (NKAD) form a G4 motif region. Lys-220 lines the ATP pocket. A region of interest (G5 motif) is located at residue Ile-243. Trp-258 lines the ATP pocket. 2 positions are modified to phosphoserine: Ser-355 and Ser-456. Positions 444 to 532 (DKPTYDEIFY…PHLVPPSKRR (89 aa)) constitute an EH domain. In terms of domain architecture, EF-hand spans 476 to 511 (LPNTVLGKIWKLADVDKDGLLDDEEFALANHLIKVK). The Ca(2+) site is built by Asp-489, Asp-491, Asp-493, and Glu-500.

The protein belongs to the TRAFAC class dynamin-like GTPase superfamily. Dynamin/Fzo/YdjA family. EHD subfamily. As to quaternary structure, homooligomer, and heterooligomer with EHD2, EHD3 and EHD4, ATP-binding is required for heterooligomerization. Interacts (via EH domain) with MICALL1 (via NPF1 motif); the interaction is direct and recruits EHD1 to membranes. Interacts with RAB35; the interaction is indirect through MICALL1 and recruits EHD1 to membranes. Interacts (via EH domain) with PACSIN2 (via NPF motifs); regulates localization to tubular recycling endosome membranes. Interacts with PACSIN1. Interacts with RAB8A. Interacts with FER1L5 (via second C2 domain). Interacts with MYOF. Interacts with ZFYVE20. Interacts (via EH domain) with RAB11FIP2.

The protein localises to the recycling endosome membrane. Its subcellular location is the early endosome membrane. It localises to the cell membrane. The protein resides in the cell projection. It is found in the cilium membrane. Its function is as follows. ATP- and membrane-binding protein that controls membrane reorganization/tubulation upon ATP hydrolysis. Acts in early endocytic membrane fusion and membrane trafficking of recycling endosomes. Recruited to endosomal membranes upon nerve growth factor stimulation, indirectly regulates neurite outgrowth. Plays a role in myoblast fusion. Involved in the unidirectional retrograde dendritic transport of endocytosed BACE1 and in efficient sorting of BACE1 to axons implicating a function in neuronal APP processing. Plays a role in the formation of the ciliary vesicle (CV), an early step in cilium biogenesis. Proposed to be required for the fusion of distal appendage vesicles (DAVs) to form the CV by recruiting SNARE complex component SNAP29. Is required for recruitment of transition zone proteins CEP290, RPGRIP1L, TMEM67 and B9D2, and of IFT20 following DAV reorganization before Rab8-dependent ciliary membrane extension. Required for the loss of CCP110 form the mother centriole essential for the maturation of the basal body during ciliogenesis. This Pongo abelii (Sumatran orangutan) protein is EH domain-containing protein 1.